We begin with the raw amino-acid sequence, 123 residues long: Small ribosomal subunit protein uS12c (123 aa).

This sequence belongs to the universal ribosomal protein uS12 family. As to quaternary structure, part of the 30S ribosomal subunit.

Its subcellular location is the plastid. It is found in the chloroplast. Functionally, with S4 and S5 plays an important role in translational accuracy. Located at the interface of the 30S and 50S subunits. This Oenothera elata subsp. hookeri (Hooker's evening primrose) protein is Small ribosomal subunit protein uS12c (rps12).